The chain runs to 248 residues: Gamma-glutamyl peptidase 2 (248 aa).

One can recognise a Glutamine amidotransferase type-1 domain in the interval 17 to 212 (SEFVKEMYGG…IDRVHKIKFV (196 aa)). Catalysis depends on Cys101, which acts as the Nucleophile. Catalysis depends on residues His191 and Glu193.

The protein belongs to the peptidase C26 family.

The protein resides in the cytoplasm. The protein localises to the cytosol. It carries out the reaction an S-[(1E)-1-(hydroxyimino)-omega-(methylsulfanyl)alkyl]-L-glutathione + H2O = an S-[(1E)-1-(hydroxyimino)-omega-(methylsulfanyl)alkyl]-L-cysteinylglycine + L-glutamate. The catalysed reaction is (E)-1-(glutathione-S-yl)-2-(1H-indol-3-yl)acetohydroximate + H2O = (E)-1-(glycyl-L-cystein-S-yl)-2-(1H-indol-3-yl)acetohydroximate + L-glutamate. It catalyses the reaction 2-(glutathion-S-yl)-2-(1H-indol-3-yl)acetonitrile + H2O = 2-(glycyl-L-cystein-S-yl)-2-(1H-indol-3-yl)acetonitrile + L-glutamate. The enzyme catalyses (Z)-1-(glutathione-S-yl)-2-phenylacetohydroximate + H2O = (Z)-1-(glycyl-L-cystein-S-yl)-2-phenylacetohydroximate + L-glutamate. Its pathway is secondary metabolite biosynthesis. Its function is as follows. Involved in glucosinolate biosynthesis. Hydrolyzes the gamma-glutamyl peptide bond of several glutathione (GSH) conjugates to produce Cys-Gly conjugates related to glucosinolates. The gamma-Glu-Cys-Gly-GSH conjugates are the sulfur-donating molecule in glucosinolate biosynthesis. This Arabidopsis thaliana (Mouse-ear cress) protein is Gamma-glutamyl peptidase 2.